The sequence spans 660 residues: MEHIRTPKVENVRLVDRVSPKKAALGTLYLTATHVIFVENSPGSRKETWILHSQISTIEKQATTATGCPLLIRCKNFQIIQLIIPQERDCHDVYISLIRLARPVKYGELYCFSFNPMLDKEEREQGWVLIDLSEEYKRMGLPNHYWQLSDVNRDYRVCDSYPTELYVPKSATAHIIVGSSKFRSRRRFPVLSYYYKDNHASICRSSQPLSGFSARCLEDEQMLQAIRKANPGSDFVYVVDTRPKLNAMANRAAGKGYENEDNYSNIKFQFIGIENIHVMRNSLQKMLEVCELKSPSMSDFLWGLENSGWLRHIKAIMDAGIFIAKAVSEEGTSVLVHCSDGWDRTAQVCSVASLLLDPHYRTLKGFMVLIEKDWISFGHKFNHRYGNLDGDPKEISPVIDQFIECVWQLMEQFPCAFEFNERFLIHIQHHIYSCQFGNFLCNSQKERQELKIQERTYSLWAHLWKNRADYLNPLFRADHSQTQGTLHLPTIPCNFMYKFWSGMYNRFEKGMQPRQSVTDYLMAVKEETQQLEEELEALEERLEKIQKVQLNCTKVKSKQSEPSKHSGFSTSDNSIANTPQDYSGNMKSFPSRSPSQGDEDSALILTQDNLKSSDPDLSANSDQESGVEDLSCRSPSGGEHAPSEDSGKDRDSDEAVFLTA.

The Myotubularin phosphatase domain occupies 126 to 504 (GWVLIDLSEE…FMYKFWSGMY (379 aa)). 3 residues coordinate a 1,2-diacyl-sn-glycero-3-phospho-(1D-myo-inositol-3-phosphate): Asn-250, Asn-275, and Ile-276. Cys-338 serves as the catalytic Phosphocysteine intermediate. The a 1,2-diacyl-sn-glycero-3-phospho-(1D-myo-inositol-3-phosphate) site is built by Ser-339, Asp-340, Gly-341, Trp-342, Asp-343, Arg-344, and Arg-384. Positions 514-558 (RQSVTDYLMAVKEETQQLEEELEALEERLEKIQKVQLNCTKVKSK) form a coiled coil. The tract at residues 554-660 (KVKSKQSEPS…DSDEAVFLTA (107 aa)) is disordered. A compositionally biased stretch (polar residues) spans 566–596 (SGFSTSDNSIANTPQDYSGNMKSFPSRSPSQ). The residue at position 578 (Thr-578) is a Phosphothreonine. The span at 641-653 (APSEDSGKDRDSD) shows a compositional bias: basic and acidic residues.

The protein belongs to the protein-tyrosine phosphatase family. Non-receptor class myotubularin subfamily. In terms of assembly, heterodimer (via C-terminus) with MTMR9 (via coiled coil domain); the interaction enhances MTMR7 catalytic activity. Does not homodimerize. Interacts with RAB1B (in GDP-bound form).

It localises to the cytoplasm. It is found in the endomembrane system. The enzyme catalyses a 1,2-diacyl-sn-glycero-3-phospho-(1D-myo-inositol-3-phosphate) + H2O = a 1,2-diacyl-sn-glycero-3-phospho-(1D-myo-inositol) + phosphate. It carries out the reaction 1D-myo-inositol 1,3-bisphosphate + H2O = 1D-myo-inositol 1-phosphate + phosphate. Interaction with MTMR9 increases phosphatase activity. Functionally, lipid phosphatase that specifically dephosphorylates the D-3 position of phosphatidylinositol 3-phosphate (PtdIns(3)P) and inositol 1,3-bisphosphate (Ins(1,3)P2). This is Phosphatidylinositol-3-phosphate phosphatase MTMR7 from Pongo abelii (Sumatran orangutan).